A 338-amino-acid polypeptide reads, in one-letter code: Ketol-acid reductoisomerase (NADP(+)) (338 aa).

Residues 1-181 form the KARI N-terminal Rossmann domain; it reads MNVYYDKDCD…GGGRSGIIET (181 aa). Residues 24-27, Arg47, Ser50, Ser52, and 82-85 each bind NADP(+); these read YGSQ and DEFQ. His107 is an active-site residue. Gly133 is an NADP(+) binding site. The KARI C-terminal knotted domain occupies 182–327; it reads TFKDETETDL…AKLRGMMPWI (146 aa). Asp190, Glu194, Glu226, and Glu230 together coordinate Mg(2+). Ser251 contacts substrate.

Belongs to the ketol-acid reductoisomerase family. It depends on Mg(2+) as a cofactor.

It carries out the reaction (2R)-2,3-dihydroxy-3-methylbutanoate + NADP(+) = (2S)-2-acetolactate + NADPH + H(+). It catalyses the reaction (2R,3R)-2,3-dihydroxy-3-methylpentanoate + NADP(+) = (S)-2-ethyl-2-hydroxy-3-oxobutanoate + NADPH + H(+). It functions in the pathway amino-acid biosynthesis; L-isoleucine biosynthesis; L-isoleucine from 2-oxobutanoate: step 2/4. Its pathway is amino-acid biosynthesis; L-valine biosynthesis; L-valine from pyruvate: step 2/4. Its function is as follows. Involved in the biosynthesis of branched-chain amino acids (BCAA). Catalyzes an alkyl-migration followed by a ketol-acid reduction of (S)-2-acetolactate (S2AL) to yield (R)-2,3-dihydroxy-isovalerate. In the isomerase reaction, S2AL is rearranged via a Mg-dependent methyl migration to produce 3-hydroxy-3-methyl-2-ketobutyrate (HMKB). In the reductase reaction, this 2-ketoacid undergoes a metal-dependent reduction by NADPH to yield (R)-2,3-dihydroxy-isovalerate. This is Ketol-acid reductoisomerase (NADP(+)) from Psychrobacter cryohalolentis (strain ATCC BAA-1226 / DSM 17306 / VKM B-2378 / K5).